Consider the following 212-residue polypeptide: MGVTCVSQMPVAEGKSLQQTVELLTKKLEMLGAEKQGTFCVDCETYHTAASTLGSQGQAGKLMYVMHNSEYPLSCFALFENGPCLIADTNFDVLMVKLKGFFQSAKASKIETRGTRYQYCDFLVKVGTVTMGPSARGISVEVEYGPCVVASDCWSLLLEFLQSFLGSHAPGAPTVFGNRHDAVYGPADTMIQYMELFNKIRKQQQVPVAGIR.

This sequence belongs to the Mediator complex subunit 20 family. As to quaternary structure, component of the Mediator complex, which is composed of MED1, MED4, MED6, MED7, MED8, MED9, MED10, MED11, MED12, MED13, MED13L, MED14, MED15, MED16, MED17, MED18, MED19, MED20, MED21, MED22, MED23, MED24, MED25, MED26, MED27, MED29, MED30, MED31, CCNC, CDK8 and CDC2L6/CDK11. The MED12, MED13, CCNC and CDK8 subunits form a distinct module termed the CDK8 module. Mediator containing the CDK8 module is less active than Mediator lacking this module in supporting transcriptional activation. Individual preparations of the Mediator complex lacking one or more distinct subunits have been variously termed ARC, CRSP, DRIP, PC2, SMCC and TRAP. Interacts with PPARG.

It localises to the nucleus. In terms of biological role, component of the Mediator complex, a coactivator involved in the regulated transcription of nearly all RNA polymerase II-dependent genes. Mediator functions as a bridge to convey information from gene-specific regulatory proteins to the basal RNA polymerase II transcription machinery. Mediator is recruited to promoters by direct interactions with regulatory proteins and serves as a scaffold for the assembly of a functional preinitiation complex with RNA polymerase II and the general transcription factors. The protein is Mediator of RNA polymerase II transcription subunit 20 (Med20) of Mus musculus (Mouse).